The sequence spans 560 residues: Arginine--tRNA ligase (560 aa).

The 'HIGH' region signature appears at 164–174; that stretch reads FYYNDAGNQID.

This sequence belongs to the class-I aminoacyl-tRNA synthetase family. In terms of assembly, monomer.

It localises to the cytoplasm. The enzyme catalyses tRNA(Arg) + L-arginine + ATP = L-arginyl-tRNA(Arg) + AMP + diphosphate. This is Arginine--tRNA ligase from Bordetella pertussis (strain Tohama I / ATCC BAA-589 / NCTC 13251).